A 226-amino-acid chain; its full sequence is MLDRDGFRPNVGIILLNQRNQVFWGKRIRTHSWQFPQGGIDRGETPEQAMFRELHEEVGLQPCHVRVVARTRDWLRYEVPDRYIRRDARGHYKGQKQIWFLLQLVGHDWDLNLRATNHPEFDAWRWNDYWVPLDVVVEFKRGVYEMALTELARFLPRNDQRNRYLRSGMRQREGAPEVSLGTTTQLRTTSLLVHPGMELPPGASFDPDPRTGDGDPGMPGIHKPAG.

A Nudix hydrolase domain is found at 6–149; sequence GFRPNVGIIL…KRGVYEMALT (144 aa). Residues 38 to 59 carry the Nudix box motif; that stretch reads GGIDRGETPEQAMFRELHEEVG. The segment at 197–226 is disordered; sequence MELPPGASFDPDPRTGDGDPGMPGIHKPAG.

This sequence belongs to the Nudix hydrolase family. RppH subfamily. It depends on a divalent metal cation as a cofactor.

Accelerates the degradation of transcripts by removing pyrophosphate from the 5'-end of triphosphorylated RNA, leading to a more labile monophosphorylated state that can stimulate subsequent ribonuclease cleavage. The sequence is that of RNA pyrophosphohydrolase from Paracidovorax citrulli (strain AAC00-1) (Acidovorax citrulli).